Here is a 462-residue protein sequence, read N- to C-terminus: Receptor like protein 29 (462 aa).

Residues 1–26 (MTMKRALPSPSSLLFFFLLITPLFLC) form the signal peptide. Residues 27–441 (QENRVSASMP…SQASRYYRSC (415 aa)) are Extracellular-facing. A glycan (N-linked (GlcNAc...) asparagine) is linked at N139. LRR repeat units follow at residues 139–164 (NSSL…ISSL), 165–188 (KSLQ…IFSL), 190–212 (SLVH…LGNL), 213–236 (NNLV…ISQL), 238–260 (MLQK…VEKL), 261–284 (RSLS…ISNL), 286–308 (SLQY…LGFL), 309–331 (PKLQ…SYTK), 332–355 (LTNL…GFES), and 357–381 (PHVF…SFLR). Residues N334, N363, and N416 are each glycosylated (N-linked (GlcNAc...) asparagine). A helical membrane pass occupies residues 442-462 (FFANALFPFALFLGLHQRWVL).

It belongs to the RLP family.

It localises to the cell membrane. This Arabidopsis thaliana (Mouse-ear cress) protein is Receptor like protein 29.